Here is a 227-residue protein sequence, read N- to C-terminus: 7-cyano-7-deazaguanine synthase (227 aa).

7 to 17 (LSGGMDSLVTT) contacts ATP. Zn(2+) is bound by residues Cys-187, Cys-195, Cys-198, and Cys-201.

Belongs to the QueC family. It depends on Zn(2+) as a cofactor.

The enzyme catalyses 7-carboxy-7-deazaguanine + NH4(+) + ATP = 7-cyano-7-deazaguanine + ADP + phosphate + H2O + H(+). It participates in purine metabolism; 7-cyano-7-deazaguanine biosynthesis. Functionally, catalyzes the ATP-dependent conversion of 7-carboxy-7-deazaguanine (CDG) to 7-cyano-7-deazaguanine (preQ(0)). This chain is 7-cyano-7-deazaguanine synthase, found in Chlorobium luteolum (strain DSM 273 / BCRC 81028 / 2530) (Pelodictyon luteolum).